The primary structure comprises 429 residues: Serine hydroxymethyltransferase (429 aa).

(6S)-5,6,7,8-tetrahydrofolate contacts are provided by residues leucine 130 and 134 to 136; that span reads GHL. Lysine 239 is subject to N6-(pyridoxal phosphate)lysine.

The protein belongs to the SHMT family. As to quaternary structure, homodimer. It depends on pyridoxal 5'-phosphate as a cofactor.

The protein localises to the cytoplasm. It catalyses the reaction (6R)-5,10-methylene-5,6,7,8-tetrahydrofolate + glycine + H2O = (6S)-5,6,7,8-tetrahydrofolate + L-serine. The protein operates within one-carbon metabolism; tetrahydrofolate interconversion. It participates in amino-acid biosynthesis; glycine biosynthesis; glycine from L-serine: step 1/1. Its function is as follows. Catalyzes the reversible interconversion of serine and glycine with tetrahydrofolate (THF) serving as the one-carbon carrier. This reaction serves as the major source of one-carbon groups required for the biosynthesis of purines, thymidylate, methionine, and other important biomolecules. Also exhibits THF-independent aldolase activity toward beta-hydroxyamino acids, producing glycine and aldehydes, via a retro-aldol mechanism. The sequence is that of Serine hydroxymethyltransferase from Phenylobacterium zucineum (strain HLK1).